The primary structure comprises 224 residues: Urease accessory protein UreF (224 aa).

This sequence belongs to the UreF family. As to quaternary structure, ureD, UreF and UreG form a complex that acts as a GTP-hydrolysis-dependent molecular chaperone, activating the urease apoprotein by helping to assemble the nickel containing metallocenter of UreC. The UreE protein probably delivers the nickel.

The protein localises to the cytoplasm. In terms of biological role, required for maturation of urease via the functional incorporation of the urease nickel metallocenter. In Klebsiella pneumoniae (strain 342), this protein is Urease accessory protein UreF.